Consider the following 322-residue polypeptide: Tetraacyldisaccharide 4'-kinase (322 aa).

ATP is bound at residue 54–61 (SVGGTGKT).

Belongs to the LpxK family.

The catalysed reaction is a lipid A disaccharide + ATP = a lipid IVA + ADP + H(+). The protein operates within glycolipid biosynthesis; lipid IV(A) biosynthesis; lipid IV(A) from (3R)-3-hydroxytetradecanoyl-[acyl-carrier-protein] and UDP-N-acetyl-alpha-D-glucosamine: step 6/6. In terms of biological role, transfers the gamma-phosphate of ATP to the 4'-position of a tetraacyldisaccharide 1-phosphate intermediate (termed DS-1-P) to form tetraacyldisaccharide 1,4'-bis-phosphate (lipid IVA). This chain is Tetraacyldisaccharide 4'-kinase, found in Francisella tularensis subsp. tularensis (strain FSC 198).